A 75-amino-acid chain; its full sequence is Protein BsdD (75 aa).

Its function is as follows. Involved in the non-oxidative decarboxylation and detoxification of phenolic derivatives under both aerobic and anaerobic conditions, however the precise biochemical function of BsdD in metabolism of phenolic acid is unknown. This Bacillus subtilis (strain 168) protein is Protein BsdD.